The chain runs to 401 residues: Type 3 secretion system translocon protein SctE (401 aa).

Residues 129–160 are a coiled coil; that stretch reads IQRLHEQNMKKIEENQEKIKETEENAKQVKKS. 2 helical membrane-spanning segments follow: residues 166-186 and 225-245; these read IFGW…VASG and LGPI…VMTF. A coiled-coil region spans residues 345–379; that stretch reads LALNKADMAALQSIIDRLKEELSHLSESHRQVMEL.

Belongs to the SctE/SipB/YopB family. In terms of assembly, the core secretion machinery of the T3SS is composed of approximately 20 different proteins, including cytoplasmic components, a base, an export apparatus and a needle. This subunit is involved in the formation of a pore, called the translocon, in host membrane. Interacts with YopD/SctB. Together with YopD/SctB, forms a multimeric integral membrane complex with a mass of between 500 and 700 kDa.

The protein localises to the secreted. The protein resides in the host membrane. Functionally, component of the type III secretion system (T3SS), also called injectisome, which is used to inject bacterial effector proteins into eukaryotic host cells. YopB/SctE and YopD/SctB are inserted into the host membrane where they form a pore and allow the translocation of effector proteins into the cytosol of target cells. Is an essential virulence determinant. Required for YopE translocation. In terms of biological role, essential for the establishment of Yersinia infections in a mouse model system, but not for the targeting of effector Yops. May modulate the host's immune response at a distance from the site of infection. This Yersinia enterocolitica protein is Type 3 secretion system translocon protein SctE.